The sequence spans 222 residues: Small ribosomal subunit protein uS7m (222 aa).

The protein belongs to the universal ribosomal protein uS7 family. In terms of assembly, part of the small ribosomal subunit.

It localises to the mitochondrion. Its function is as follows. One of the primary rRNA binding proteins, it binds directly to 18S rRNA where it nucleates assembly of the head domain of the small subunit. The sequence is that of Small ribosomal subunit protein uS7m (RPS7) from Prototheca wickerhamii.